A 314-amino-acid chain; its full sequence is DNA-directed RNA polymerase subunit alpha (314 aa).

The segment at 1-228 is alpha N-terminal domain (alpha-NTD); sequence MIEIEKPKIE…EHLNIFVGLT (228 aa). Residues 246–314 are alpha C-terminal domain (alpha-CTD); the sequence is EKVLEMTIEE…ELGLGLRKDD (69 aa).

This sequence belongs to the RNA polymerase alpha chain family. Homodimer. The RNAP catalytic core consists of 2 alpha, 1 beta, 1 beta' and 1 omega subunit. When a sigma factor is associated with the core the holoenzyme is formed, which can initiate transcription.

The catalysed reaction is RNA(n) + a ribonucleoside 5'-triphosphate = RNA(n+1) + diphosphate. In terms of biological role, DNA-dependent RNA polymerase catalyzes the transcription of DNA into RNA using the four ribonucleoside triphosphates as substrates. The chain is DNA-directed RNA polymerase subunit alpha from Bacillus velezensis (strain DSM 23117 / BGSC 10A6 / LMG 26770 / FZB42) (Bacillus amyloliquefaciens subsp. plantarum).